Here is a 552-residue protein sequence, read N- to C-terminus: CTP synthase (552 aa).

Positions 1–270 (MTKYVFVTGG…DRIICDELKL (270 aa)) are amidoligase domain. A CTP-binding site is contributed by serine 13. Position 13 (serine 13) interacts with UTP. ATP-binding positions include 14-19 (SLGKGI) and aspartate 71. Residues aspartate 71 and glutamate 144 each coordinate Mg(2+). Residues 151-153 (DIE), 191-196 (KTKPTQ), and lysine 227 each bind CTP. Residues 191 to 196 (KTKPTQ) and lysine 227 contribute to the UTP site. In terms of domain architecture, Glutamine amidotransferase type-1 spans 295–547 (TIGMVGKYVD…VEAALANKQA (253 aa)). Glycine 356 is a binding site for L-glutamine. The active-site Nucleophile; for glutamine hydrolysis is the cysteine 383. Residues 384–387 (LGMQ), glutamate 407, and arginine 473 each bind L-glutamine. Residues histidine 520 and glutamate 522 contribute to the active site.

The protein belongs to the CTP synthase family. As to quaternary structure, homotetramer.

The enzyme catalyses UTP + L-glutamine + ATP + H2O = CTP + L-glutamate + ADP + phosphate + 2 H(+). The catalysed reaction is L-glutamine + H2O = L-glutamate + NH4(+). It catalyses the reaction UTP + NH4(+) + ATP = CTP + ADP + phosphate + 2 H(+). It functions in the pathway pyrimidine metabolism; CTP biosynthesis via de novo pathway; CTP from UDP: step 2/2. Its activity is regulated as follows. Allosterically activated by GTP, when glutamine is the substrate; GTP has no effect on the reaction when ammonia is the substrate. The allosteric effector GTP functions by stabilizing the protein conformation that binds the tetrahedral intermediate(s) formed during glutamine hydrolysis. Inhibited by the product CTP, via allosteric rather than competitive inhibition. Functionally, catalyzes the ATP-dependent amination of UTP to CTP with either L-glutamine or ammonia as the source of nitrogen. Regulates intracellular CTP levels through interactions with the four ribonucleotide triphosphates. This is CTP synthase from Burkholderia vietnamiensis (strain G4 / LMG 22486) (Burkholderia cepacia (strain R1808)).